Reading from the N-terminus, the 957-residue chain is Nitrite reductase [NAD(P)H] large subunit (957 aa).

44–79 is an FAD binding site; it reads YDRVHLTEYFAGRSAESLSLVEGDFFTQHGIELRLS. An NAD(+)-binding site is contributed by 193-225; the sequence is LREKISELGVGVHTSKATTEIVRNEQGLQLNFR. Positions 423, 425, 457, and 460 each coordinate [2Fe-2S] cluster. 4 residues coordinate [4Fe-4S] cluster: cysteine 639, cysteine 645, cysteine 679, and cysteine 683. Cysteine 683 lines the siroheme pocket.

Belongs to the nitrite and sulfite reductase 4Fe-4S domain family. In terms of assembly, homodimer which associates with NirD. Siroheme is required as a cofactor. [2Fe-2S] cluster serves as cofactor. Requires [4Fe-4S] cluster as cofactor. It depends on FAD as a cofactor.

The enzyme catalyses NH4(+) + 3 NADP(+) + 2 H2O = nitrite + 3 NADPH + 5 H(+). It carries out the reaction NH4(+) + 3 NAD(+) + 2 H2O = nitrite + 3 NADH + 5 H(+). Its pathway is nitrogen metabolism; nitrate reduction (assimilation). In Klebsiella oxytoca, this protein is Nitrite reductase [NAD(P)H] large subunit (nasB).